The primary structure comprises 451 residues: Gamma-aminobutyric acid receptor subunit alpha-2 (451 aa).

A signal peptide spans 1-28; that stretch reads MKTKLNIYNMQFLLFVFLVWDPARLVLA. Over 29–249 the chain is Extracellular; that stretch reads NIQEDEAKNN…MTAHFHLKRK (221 aa). A glycan (N-linked (GlcNAc...) asparagine) is linked at asparagine 38. Arginine 94 contacts 4-aminobutanoate. N-linked (GlcNAc...) asparagine glycosylation is present at asparagine 138. Threonine 157 provides a ligand contact to 4-aminobutanoate. A disulfide bond links cysteine 166 and cysteine 180. The helical transmembrane segment at 250–270 threads the bilayer; the sequence is IGYFVIQTYLPCIMTVILSQV. Residues 271 to 280 are Cytoplasmic-facing; sequence SFWLNRESVP. Residues 281–300 traverse the membrane as a helical segment; that stretch reads ARTVFGVTTVLTMTTLSISA. At 301–311 the chain is on the extracellular side; the sequence is RNSLPKVAYAT. A helical transmembrane segment spans residues 312 to 332; it reads AMDWFIAVCYAFVFSALIEFA. Residues 333 to 420 lie on the Cytoplasmic side of the membrane; it reads TVNYFTKRGW…FNSVSKIDRM (88 aa). A helical membrane pass occupies residues 421-441; it reads SRIVFPVLFGTFNLVYWATYL. The Extracellular portion of the chain corresponds to 442–451; the sequence is NREPVLGVSP.

This sequence belongs to the ligand-gated ion channel (TC 1.A.9) family. Gamma-aminobutyric acid receptor (TC 1.A.9.5) subfamily. GABRA2 sub-subfamily. As to quaternary structure, heteropentamer, formed by a combination of alpha (GABRA1-6), beta (GABRB1-3), gamma (GABRG1-3), delta (GABRD), epsilon (GABRE), rho (GABRR1-3), pi (GABRP) and theta (GABRQ) subunits, each subunit exhibiting distinct physiological and pharmacological properties. Interacts with UBQLN1. Interacts with KIF21B. Interacts with LHFPL4. Interacts with SHISA7; interaction leads to the regulation of GABA(A) receptor trafficking, channel deactivation kinetics and pharmacology. Glycosylated.

It is found in the postsynaptic cell membrane. It localises to the cell membrane. The protein resides in the cytoplasmic vesicle membrane. Its subcellular location is the cell projection. The protein localises to the dendrite. It catalyses the reaction chloride(in) = chloride(out). Its activity is regulated as follows. Activated by pentobarbital. Inhibited by the antagonist bicuculline. Alpha subunit of the heteropentameric ligand-gated chloride channel gated by gamma-aminobutyric acid (GABA), a major inhibitory neurotransmitter in the brain. GABA-gated chloride channels, also named GABA(A) receptors (GABAAR), consist of five subunits arranged around a central pore and contain GABA active binding site(s) located at the alpha and beta subunit interfaces. When activated by GABA, GABAARs selectively allow the flow of chloride anions across the cell membrane down their electrochemical gradient. Chloride influx into the postsynaptic neuron following GABAAR opening decreases the neuron ability to generate a new action potential, thereby reducing nerve transmission. The alpha-2 subunit exhibits synaptogenic activity together with beta-2 and very little to no activity together with beta-3, the gamma-2 subunit being necessary but not sufficient to induce rapid synaptic contacts formation. In Homo sapiens (Human), this protein is Gamma-aminobutyric acid receptor subunit alpha-2.